The sequence spans 60 residues: UPF0434 protein NMA0874 (60 aa).

It belongs to the UPF0434 family.

The sequence is that of UPF0434 protein NMA0874 from Neisseria meningitidis serogroup A / serotype 4A (strain DSM 15465 / Z2491).